Reading from the N-terminus, the 425-residue chain is MLDLKRIRTDFDTVAAKLKNRGVSEDTLTHLKELDEKRRALLVQSEELKAERNIASAAIAQAKRQKEDATQQIADMQKVSADIKTIDNQLVAIDQQVTDIITVLPNTPHDSVPVGADEEDNVEIRRWGTPRDFDFEVKAHWDLGEDLDILDWERGAKVTGARFLFYKNLGARLERALYNFMLDEHIKEGYQEIITPYMVNHDSMFGTGQYPKFKEDTFELADTNFVLIPTAEVPLTNYYRGEILDGKELPIYFTAMSPSFRSEAGSAGRDTRGLIRLHQFHKVEMVKFAKPEESYQELEKMTANAENILQKLGLPYRVISLCTGDMGFSAAKTYDLEVWIPAQNTYREISSCSNTEDFQARRAQIRYRDEADGKVKLLHTLNGSGLAVGRTVAAILENYQNEDGSVTIPEVLRPYMGGETVISPK.

230–232 is a binding site for L-serine; it reads TAE. 261 to 263 lines the ATP pocket; it reads RSE. Glu-284 lines the L-serine pocket. 348-351 is a binding site for ATP; the sequence is EISS. Ser-384 provides a ligand contact to L-serine.

The protein belongs to the class-II aminoacyl-tRNA synthetase family. Type-1 seryl-tRNA synthetase subfamily. In terms of assembly, homodimer. The tRNA molecule binds across the dimer.

Its subcellular location is the cytoplasm. It carries out the reaction tRNA(Ser) + L-serine + ATP = L-seryl-tRNA(Ser) + AMP + diphosphate + H(+). The enzyme catalyses tRNA(Sec) + L-serine + ATP = L-seryl-tRNA(Sec) + AMP + diphosphate + H(+). It functions in the pathway aminoacyl-tRNA biosynthesis; selenocysteinyl-tRNA(Sec) biosynthesis; L-seryl-tRNA(Sec) from L-serine and tRNA(Sec): step 1/1. Catalyzes the attachment of serine to tRNA(Ser). Is also able to aminoacylate tRNA(Sec) with serine, to form the misacylated tRNA L-seryl-tRNA(Sec), which will be further converted into selenocysteinyl-tRNA(Sec). The sequence is that of Serine--tRNA ligase from Streptococcus pyogenes serotype M1.